A 1487-amino-acid chain; its full sequence is Major viral transcription factor (1487 aa).

4 disordered regions span residues 41 to 295, 310 to 371, 409 to 442, and 803 to 1007; these read AAPD…LPPG, LAKT…EEAP, REPL…SRDG, and PPTR…HTPR. A compositionally biased stretch (pro residues) spans 66 to 75; the sequence is VIPPPSPAPE. Composition is skewed to low complexity over residues 165–193 and 201–213; these read PSSA…SSSS and DGAG…SSSS. The segment covering 214-224 has biased composition (acidic residues); it reads DDSDSDEGGEE. The span at 235-272 shows a compositional bias: low complexity; that stretch reads AAKTPSAAGSPGPSSGGDRPAAGAATPKSCRSGAASPG. Positions 273–285 are enriched in pro residues; sequence APAPAPASAPAPS. Low complexity-rich tracts occupy residues 807–829, 849–860, and 867–877; these read SQQP…AEGS, PSSHSQSPQHSQ, and ATTATCCRATQ. The segment covering 878-893 has biased composition (polar residues); sequence TNARSRGQQHQPQKAR. Over residues 920–929 the composition is skewed to basic residues; sequence HGRPRGKSGK. The span at 938–951 shows a compositional bias: low complexity; sequence AAQAGASASFSSSA. Residues 988–1007 are compositionally biased toward basic and acidic residues; it reads GPDRRGGFRRVPRGDCHTPR.

The protein belongs to the herpesviridae ICP4 family. A long stretch of serine residues may be a major site of phosphorylation.

It is found in the host nucleus. In terms of biological role, this IE protein is a multifunctional protein capable of migrating to the nucleus, binding to DNA, trans-activating other viral genes, and autoregulating its own synthesis. The polypeptide is Major viral transcription factor (IE) (Equine herpesvirus 1 (strain Kentucky A) (EHV-1)).